Consider the following 101-residue polypeptide: Small ribosomal subunit protein bS18c (101 aa).

This sequence belongs to the bacterial ribosomal protein bS18 family. As to quaternary structure, part of the 30S ribosomal subunit.

It is found in the plastid. The protein resides in the chloroplast. The polypeptide is Small ribosomal subunit protein bS18c (Carica papaya (Papaya)).